The sequence spans 1004 residues: 2-oxoglutarate dehydrogenase E1 component (1004 aa).

This sequence belongs to the alpha-ketoglutarate dehydrogenase family. Homodimer. Part of the 2-oxoglutarate dehydrogenase (OGDH) complex composed of E1 (2-oxoglutarate dehydrogenase), E2 (dihydrolipoamide succinyltransferase) and E3 (dihydrolipoamide dehydrogenase); the complex contains multiple copies of the three enzymatic components (E1, E2 and E3). Thiamine diphosphate is required as a cofactor.

It carries out the reaction N(6)-[(R)-lipoyl]-L-lysyl-[protein] + 2-oxoglutarate + H(+) = N(6)-[(R)-S(8)-succinyldihydrolipoyl]-L-lysyl-[protein] + CO2. Functionally, E1 component of the 2-oxoglutarate dehydrogenase (OGDH) complex which catalyzes the decarboxylation of 2-oxoglutarate, the first step in the conversion of 2-oxoglutarate to succinyl-CoA and CO(2). This is 2-oxoglutarate dehydrogenase E1 component from Brucella melitensis biotype 2 (strain ATCC 23457).